A 350-amino-acid chain; its full sequence is S-adenosylmethionine:tRNA ribosyltransferase-isomerase (350 aa).

This sequence belongs to the QueA family. In terms of assembly, monomer.

It is found in the cytoplasm. The catalysed reaction is 7-aminomethyl-7-carbaguanosine(34) in tRNA + S-adenosyl-L-methionine = epoxyqueuosine(34) in tRNA + adenine + L-methionine + 2 H(+). It functions in the pathway tRNA modification; tRNA-queuosine biosynthesis. Transfers and isomerizes the ribose moiety from AdoMet to the 7-aminomethyl group of 7-deazaguanine (preQ1-tRNA) to give epoxyqueuosine (oQ-tRNA). The polypeptide is S-adenosylmethionine:tRNA ribosyltransferase-isomerase (Bacillus mycoides (strain KBAB4) (Bacillus weihenstephanensis)).